Consider the following 498-residue polypeptide: Succinate-semialdehyde dehydrogenase [NADP(+)] 1 (498 aa).

247–252 (GSTNVG) is a binding site for NAD(+). Active-site residues include Glu-269 and Cys-303.

This sequence belongs to the aldehyde dehydrogenase family. As to quaternary structure, homotetramer.

The protein localises to the cytoplasm. The enzyme catalyses succinate semialdehyde + NAD(+) + H2O = succinate + NADH + 2 H(+). The catalysed reaction is succinate semialdehyde + NADP(+) + H2O = succinate + NADPH + 2 H(+). Its pathway is amino-acid degradation; 4-aminobutanoate degradation. Catalyzes the oxidation of succinate semialdehyde to succinate. Can utilize both NAD(+) or NADP(+) as a coenzyme. Functions in a gamma-aminobutyrate (GABA) degradation pathway that allows growth utilizing GABA as a nitrogen source. Functions in the GABA shunt, which allows to bypass 2 reactions in the TCA cycle by removing alpha-ketoglutarate from the cycle and feeding succinate and NADH back into the cycle. The chain is Succinate-semialdehyde dehydrogenase [NADP(+)] 1 (ssd1) from Schizosaccharomyces pombe (strain 972 / ATCC 24843) (Fission yeast).